Reading from the N-terminus, the 250-residue chain is 7-cyano-7-deazaguanine synthase (250 aa).

An ATP-binding site is contributed by L28–V38. 4 residues coordinate Zn(2+): C213, C226, C229, and C232.

This sequence belongs to the QueC family. Zn(2+) is required as a cofactor.

The catalysed reaction is 7-carboxy-7-deazaguanine + NH4(+) + ATP = 7-cyano-7-deazaguanine + ADP + phosphate + H2O + H(+). The protein operates within purine metabolism; 7-cyano-7-deazaguanine biosynthesis. Functionally, catalyzes the ATP-dependent conversion of 7-carboxy-7-deazaguanine (CDG) to 7-cyano-7-deazaguanine (preQ(0)). This is 7-cyano-7-deazaguanine synthase from Rhodopirellula baltica (strain DSM 10527 / NCIMB 13988 / SH1).